Here is a 26-residue protein sequence, read N- to C-terminus: Oxyopinin-3b (26 aa).

As to expression, expressed by the venom gland.

Its subcellular location is the secreted. May have cytolytic and antimicrobial activity. The sequence is that of Oxyopinin-3b from Oxyopes takobius (Lynx spider).